The chain runs to 125 residues: Small ribosomal subunit protein uS12 (125 aa).

Asp-89 carries the post-translational modification 3-methylthioaspartic acid. Residues 106-125 are disordered; it reads GVKDRKQSRSKYGAKRPKKA. The span at 113–125 shows a compositional bias: basic residues; the sequence is SRSKYGAKRPKKA.

Belongs to the universal ribosomal protein uS12 family. As to quaternary structure, part of the 30S ribosomal subunit. Contacts proteins S8 and S17. May interact with IF1 in the 30S initiation complex.

Its function is as follows. With S4 and S5 plays an important role in translational accuracy. Functionally, interacts with and stabilizes bases of the 16S rRNA that are involved in tRNA selection in the A site and with the mRNA backbone. Located at the interface of the 30S and 50S subunits, it traverses the body of the 30S subunit contacting proteins on the other side and probably holding the rRNA structure together. The combined cluster of proteins S8, S12 and S17 appears to hold together the shoulder and platform of the 30S subunit. The polypeptide is Small ribosomal subunit protein uS12 (Aromatoleum aromaticum (strain DSM 19018 / LMG 30748 / EbN1) (Azoarcus sp. (strain EbN1))).